A 121-amino-acid polypeptide reads, in one-letter code: Chorion protein S15 (121 aa).

The first 18 residues, 1-18 (MKYLFVCVSLALFAYISA), serve as a signal peptide directing secretion.

This sequence belongs to the chorion protein S15/S18 family.

The protein localises to the secreted. Functionally, chorion membrane (egg shell) protein; plays a role in protecting the egg from the environment. The sequence is that of Chorion protein S15 (Cp15) from Drosophila subobscura (Fruit fly).